The primary structure comprises 106 residues: Gas vesicle protein J (106 aa).

This sequence belongs to the gas vesicle GvpA family.

Its subcellular location is the gas vesicle. A minor component of the gas vesicle, might be involved in nucleating gas vesicle formation. Gas vesicles are hollow, gas filled proteinaceous nanostructures found in some microorganisms. It is not clear what function gas vesicles perform in soil bacteria. The chain is Gas vesicle protein J from Streptomyces sp. (strain CB03234).